The following is a 287-amino-acid chain: Succinate dehydrogenase [ubiquinone] iron-sulfur subunit, mitochondrial (287 aa).

A mitochondrion-targeting transit peptide spans 1-23 (MISNVLKRASVLARSNGIQSAFY). The region spanning 51 to 140 (FQVYRYNEET…GDTVKVYPLP (90 aa)) is the 2Fe-2S ferredoxin-type domain. [2Fe-2S] cluster-binding residues include Cys-101, Cys-106, Cys-109, and Cys-121. In terms of domain architecture, 4Fe-4S ferredoxin-type spans 186-216 (NRHKLDGLYECILCACCSTSCPSYWWSEGGD). Cys-196, Cys-199, and Cys-202 together coordinate [4Fe-4S] cluster. Residue Cys-206 coordinates [3Fe-4S] cluster. Trp-211 is a binding site for a ubiquinone. Residues Cys-257 and Cys-263 each coordinate [3Fe-4S] cluster. Cys-267 is a binding site for [4Fe-4S] cluster.

The protein belongs to the succinate dehydrogenase/fumarate reductase iron-sulfur protein family. As to quaternary structure, component of complex II composed of four subunits: the flavoprotein (FP) SDHA, iron-sulfur protein (IP) SDHB, and a cytochrome b composed of a large and a small subunit. The cofactor is [2Fe-2S] cluster. [3Fe-4S] cluster is required as a cofactor. It depends on [4Fe-4S] cluster as a cofactor.

The protein localises to the mitochondrion inner membrane. The enzyme catalyses a quinone + succinate = fumarate + a quinol. It functions in the pathway carbohydrate metabolism; tricarboxylic acid cycle; fumarate from succinate (eukaryal route): step 1/1. Iron-sulfur protein (IP) subunit of succinate dehydrogenase (SDH) that is involved in complex II of the mitochondrial electron transport chain and is responsible for transferring electrons from succinate to ubiquinone (coenzyme Q). The chain is Succinate dehydrogenase [ubiquinone] iron-sulfur subunit, mitochondrial (sdhB) from Dictyostelium discoideum (Social amoeba).